The chain runs to 422 residues: Phagosome assembly factor 1 (422 aa).

The protein belongs to the PHAF1 family. Interacts with BCAS3; the interaction is requrired for the association with the phagophore.

Its subcellular location is the cytoplasm. The protein localises to the preautophagosomal structure. Plays a regulatory role in autophagic activity. In complex with BCAS3, associates with the autophagosome formation site during both non-selective and selective autophagy. The protein is Phagosome assembly factor 1 of Homo sapiens (Human).